A 152-amino-acid chain; its full sequence is Ribonuclease H (152 aa).

In terms of domain architecture, RNase H type-1 spans 1-142 (MDSKVVIYTD…ADKLAVQGRE (142 aa)). Positions 10, 48, 70, and 134 each coordinate Mg(2+).

This sequence belongs to the RNase H family. Monomer. Mg(2+) serves as cofactor.

It is found in the cytoplasm. It carries out the reaction Endonucleolytic cleavage to 5'-phosphomonoester.. Endonuclease that specifically degrades the RNA of RNA-DNA hybrids. The sequence is that of Ribonuclease H from Rickettsia felis (strain ATCC VR-1525 / URRWXCal2) (Rickettsia azadi).